A 171-amino-acid chain; its full sequence is Signal peptidase complex catalytic subunit SEC11 (171 aa).

The Cytoplasmic portion of the chain corresponds to 1–6; that stretch reads MNIRQQ. Residues 7–24 traverse the membrane as a helical; Signal-anchor for type II membrane protein segment; the sequence is LVQLLNLAMVLSTAFMFW. At 25–171 the chain is on the lumenal side; the sequence is KGLGLVTNSN…MALSTLLTRE (147 aa). Catalysis depends on charge relay system residues serine 44, histidine 83, and aspartate 113. The tract at residues 157–168 is C-terminal short (CTS) helix; the sequence is GLLGLMALSTLL.

The protein belongs to the peptidase S26B family. In terms of assembly, component of the signal peptidase complex (SPC) composed of a catalytic subunit SEC11 and three accessory subunits SPC1, SPC2 and SPC3. The complex induces a local thinning of the ER membrane which is used to measure the length of the signal peptide (SP) h-region of protein substrates. This ensures the selectivity of the complex towards h-regions shorter than 18-20 amino acids. SPC associates with the translocon complex.

It localises to the endoplasmic reticulum membrane. It carries out the reaction Cleavage of hydrophobic, N-terminal signal or leader sequences from secreted and periplasmic proteins.. Its function is as follows. Catalytic component of the signal peptidase complex (SPC) which catalyzes the cleavage of N-terminal signal sequences from nascent proteins as they are translocated into the lumen of the endoplasmic reticulum. Specifically cleaves N-terminal signal peptides that contain a hydrophobic alpha-helix (h-region) shorter than 18-20 amino acids. The polypeptide is Signal peptidase complex catalytic subunit SEC11 (SEC11) (Komagataella phaffii (strain GS115 / ATCC 20864) (Yeast)).